Consider the following 362-residue polypeptide: Chorismate synthase (362 aa).

Positions 48 and 54 each coordinate NADP(+). Residues 125–127 (RSS), 238–239 (NA), Gly-286, 301–305 (KPTSS), and Arg-327 each bind FMN.

Belongs to the chorismate synthase family. In terms of assembly, homotetramer. Requires FMNH2 as cofactor.

It carries out the reaction 5-O-(1-carboxyvinyl)-3-phosphoshikimate = chorismate + phosphate. Its pathway is metabolic intermediate biosynthesis; chorismate biosynthesis; chorismate from D-erythrose 4-phosphate and phosphoenolpyruvate: step 7/7. In terms of biological role, catalyzes the anti-1,4-elimination of the C-3 phosphate and the C-6 proR hydrogen from 5-enolpyruvylshikimate-3-phosphate (EPSP) to yield chorismate, which is the branch point compound that serves as the starting substrate for the three terminal pathways of aromatic amino acid biosynthesis. This reaction introduces a second double bond into the aromatic ring system. The chain is Chorismate synthase from Granulibacter bethesdensis (strain ATCC BAA-1260 / CGDNIH1).